A 319-amino-acid chain; its full sequence is N-acetyllactosaminide alpha-1,3-galactosyltransferase-like 1 (319 aa).

The Cytoplasmic portion of the chain corresponds to Met-1–Glu-6. The chain crosses the membrane as a helical; Signal-anchor for type II membrane protein span at residues Ala-7–Ser-26. The Lumenal portion of the chain corresponds to Arg-27–Pro-319. N-linked (GlcNAc...) asparagine glycans are attached at residues Asn-89 and Asn-101. Substrate is bound by residues Phe-97 to Phe-102, Ala-188 to Asn-190, and His-210 to Trp-213. Glu-278 functions as the Nucleophile in the catalytic mechanism.

The protein belongs to the glycosyltransferase 6 family. Mn(2+) serves as cofactor.

The protein localises to the golgi apparatus. The protein resides in the golgi stack membrane. It catalyses the reaction a beta-D-galactosyl-(1-&gt;4)-N-acetyl-beta-D-glucosaminyl derivative + UDP-alpha-D-galactose = an alpha-D-galactosyl-(1-&gt;3)-beta-D-galactosyl-(1-&gt;4)-N-acetyl-beta-D-glucosaminyl derivative + UDP + H(+). The protein operates within protein modification; protein glycosylation. Its function is as follows. Synthesizes the galactose-alpha(1,3)-galactose group by catalyzing the transfer of a galactose residue, with an alpha-1,3 linkage, on terminal lactosaminide (Gal-beta-1,4-GlcNAc-R) disaccharide borne by a glycoprotein or a glycolipid. In Mus musculus (Mouse), this protein is N-acetyllactosaminide alpha-1,3-galactosyltransferase-like 1 (Ggta1l1).